Consider the following 2243-residue polypeptide: Zinc finger FYVE domain-containing protein 26 homolog (2243 aa).

Disordered regions lie at residues 386–416 (SQRK…RPTA) and 514–556 (KKKA…GKAS). Residues 393–408 (GENDEEDDEQYVDDDV) show a composition bias toward acidic residues. Phosphotyrosine is present on Tyr403. Over residues 517–528 (ASSDDESRERSN) the composition is skewed to basic and acidic residues. Basic residues predominate over residues 534–543 (NRRKARRQRR). One copy of the LRR 1 repeat lies at 617 to 644 (KKIIETFHLEHSQLNRELHFMEQQQLVK). At Ser1424 the chain carries Phosphoserine. The FYVE-type zinc finger occupies 1444–1500 (DEEASHCMCCRRAAFTMLMRRHHCRRCGRVVCYACSTHRIRIPELYDELEVRICNDC). Cys1450, Cys1453, Cys1467, Cys1470, Cys1475, Cys1478, Cys1497, and Cys1500 together coordinate Zn(2+). The interval 1505 to 1534 (TPAKDQGDGTSSERSAISGQVSKSSGRSDS) is disordered. The span at 1512 to 1534 (DGTSSERSAISGQVSKSSGRSDS) shows a compositional bias: polar residues. Residues 1887–1912 (YPQLANGGLNVLMDELQQLDDAQFTA) form an LRR 2 repeat.

This sequence belongs to the ZFYVE26 family.

In terms of biological role, phosphatidylinositol 3-phosphate (PtdIns[3]P)-binding protein. Involved in autophagy. The polypeptide is Zinc finger FYVE domain-containing protein 26 homolog (Drosophila melanogaster (Fruit fly)).